Consider the following 130-residue polypeptide: Capsid protein (130 aa).

Positions 32-105 are viral RNA-binding; it reads EWISSNSRSQ…FATNDDCALI (74 aa).

This sequence belongs to the Leviviricetes capsid protein family. Homodimer. The capsid proteins form dimers that assemble by group of 5. Twelve such pentamers are linked together with free dimers. The homodimers binds to the viral RNA via an operator hairpin, but also to many other RNA sequences in the viral genome; this interaction probably shifts the virus from the replicative to the assembly phase and ensures specific encapsidation of the viral genome.

The protein resides in the virion. Capsid protein self-assembles to form an icosahedral capsid with a T=3 symmetry, about 26 nm in diameter, and consisting of 89 capsid proteins dimers (178 capsid proteins). Involved in viral genome encapsidation through the interaction between a capsid protein dimer and the multiple packaging signals present in the RNA genome. The capsid also contains 1 copy of the A2 maturation protein. In terms of biological role, acts as a translational repressor of viral replicase synthesis late in infection. This latter function is the result of capsid protein interaction with an RNA hairpin which contains the replicase ribosome-binding site. The protein is Capsid protein of Enterobacteria phage fr (Bacteriophage fr).